Here is a 161-residue protein sequence, read N- to C-terminus: DNA-directed RNA polymerase 18 kDa subunit (161 aa).

The protein belongs to the poxviridae DNA-directed RNA polymerase 18 kDa subunit family. As to quaternary structure, the DNA-dependent RNA polymerase used for intermediate and late genes expression consists of eight subunits Rpo30/OPG66, Rpo7/OPG90, Rpo22/OPG103, Rpo147/OPG105, Rpo18/OPG119, Rpo19/OPG131, Rpo132/OPG151 and Rpo35/OPG156. The same holoenzyme, with the addition of the transcription-specificity factor OPG109, is used for early gene expression.

The protein localises to the virion. The enzyme catalyses RNA(n) + a ribonucleoside 5'-triphosphate = RNA(n+1) + diphosphate. In terms of biological role, part of the DNA-dependent RNA polymerase which catalyzes the transcription of viral DNA into RNA using the four ribonucleoside triphosphates as substrates. Responsible for the transcription of early, intermediate and late genes. DNA-dependent RNA polymerase associates with the early transcription factor (ETF), itself composed of OPG118 and OPG133, thereby allowing the early genes transcription. Late transcription, and probably also intermediate transcription, require newly synthesized RNA polymerase. This chain is DNA-directed RNA polymerase 18 kDa subunit (OPG119), found in Homo sapiens (Human).